A 251-amino-acid chain; its full sequence is Triosephosphate isomerase (251 aa).

9–11 (NWK) is a binding site for substrate. The active-site Electrophile is H95. E167 acts as the Proton acceptor in catalysis. Residues G173, S213, and 234-235 (GG) each bind substrate.

Belongs to the triosephosphate isomerase family. Homodimer.

The protein resides in the cytoplasm. It carries out the reaction D-glyceraldehyde 3-phosphate = dihydroxyacetone phosphate. It participates in carbohydrate biosynthesis; gluconeogenesis. Its pathway is carbohydrate degradation; glycolysis; D-glyceraldehyde 3-phosphate from glycerone phosphate: step 1/1. In terms of biological role, involved in the gluconeogenesis. Catalyzes stereospecifically the conversion of dihydroxyacetone phosphate (DHAP) to D-glyceraldehyde-3-phosphate (G3P). This is Triosephosphate isomerase from Enterococcus faecalis (strain ATCC 700802 / V583).